The following is a 578-amino-acid chain: Monooxygenase cfoE (578 aa).

A helical transmembrane segment spans residues I549–F569.

It belongs to the FMO family. FAD serves as cofactor.

It is found in the membrane. The protein operates within secondary metabolite biosynthesis; flavonoid biosynthesis. Monooxygenase; part of the gene cluster that mediates the biosynthesis of chlorflavonin, a fungal flavonoid with acetolactate synthase inhibitory activity. Within the pathway, cfoE is responsible for the chlorination of the flavonoid skeleton at position C3'. The pathway begins with the PKS-NRPS hybrid synthetase cfoA that uses benzoic acid or p-hydroxybenzoic acid as a starter unit with four rounds of chain elongation using malonyl-CoA to form the chalcone skeleton. Then, a new type of chalcone isomerase, cfoK, catalyzes the conversion of the chalcone into a flavanone by a histidine-mediated oxa-Michael addition mechanism. The desaturation of flavanone to flavone is catalyzed by a new type of flavone synthase, the flavin mononucleotide (FMN)-dependent oxidoreductase cfoJ. Monooxygenases cfoF, cfoG, and P450 cfoH are responsible for the hydroxylation of the flavonoid skeleton at sites C3, C8, and C2', respectively. Like cfoF, the dehydratase cfoI plays also a role in the hydroxylation of position C3. Methyltransferases cfoB, cfoC, and cfoD then catalyze the methylation of C7-OH, C8-OH, and C3-OH, respectively. Finally, the monooxygenase cfoE is responsible for the chlorination of flavonoid at position C3'. This is Monooxygenase cfoE from Aspergillus candidus.